Here is a 572-residue protein sequence, read N- to C-terminus: Arginine--tRNA ligase (572 aa).

Residues 121–131 carry the 'HIGH' region motif; the sequence is PNLAKEMHVGH.

The protein belongs to the class-I aminoacyl-tRNA synthetase family. In terms of assembly, monomer.

The protein localises to the cytoplasm. The enzyme catalyses tRNA(Arg) + L-arginine + ATP = L-arginyl-tRNA(Arg) + AMP + diphosphate. The polypeptide is Arginine--tRNA ligase (Chromobacterium violaceum (strain ATCC 12472 / DSM 30191 / JCM 1249 / CCUG 213 / NBRC 12614 / NCIMB 9131 / NCTC 9757 / MK)).